Consider the following 292-residue polypeptide: Acetylglutamate kinase (292 aa).

Substrate-binding positions include 62 to 63 (GG), Arg84, and Asn188.

The protein belongs to the acetylglutamate kinase family. ArgB subfamily.

It is found in the cytoplasm. The enzyme catalyses N-acetyl-L-glutamate + ATP = N-acetyl-L-glutamyl 5-phosphate + ADP. It participates in amino-acid biosynthesis; L-arginine biosynthesis; N(2)-acetyl-L-ornithine from L-glutamate: step 2/4. Its function is as follows. Catalyzes the ATP-dependent phosphorylation of N-acetyl-L-glutamate. This Methanosarcina mazei (strain ATCC BAA-159 / DSM 3647 / Goe1 / Go1 / JCM 11833 / OCM 88) (Methanosarcina frisia) protein is Acetylglutamate kinase.